We begin with the raw amino-acid sequence, 91 residues long: Small ribosomal subunit protein uS19 (91 aa).

The protein belongs to the universal ribosomal protein uS19 family.

Functionally, protein S19 forms a complex with S13 that binds strongly to the 16S ribosomal RNA. In Pseudomonas fluorescens (strain SBW25), this protein is Small ribosomal subunit protein uS19.